A 125-amino-acid polypeptide reads, in one-letter code: Phosphoribosyl-AMP cyclohydrolase (125 aa).

Asp-74 lines the Mg(2+) pocket. Cys-75 is a Zn(2+) binding site. Positions 76 and 78 each coordinate Mg(2+). The Zn(2+) site is built by Cys-92 and Cys-99.

The protein belongs to the PRA-CH family. As to quaternary structure, homodimer. Mg(2+) serves as cofactor. It depends on Zn(2+) as a cofactor.

The protein resides in the cytoplasm. The enzyme catalyses 1-(5-phospho-beta-D-ribosyl)-5'-AMP + H2O = 1-(5-phospho-beta-D-ribosyl)-5-[(5-phospho-beta-D-ribosylamino)methylideneamino]imidazole-4-carboxamide. It functions in the pathway amino-acid biosynthesis; L-histidine biosynthesis; L-histidine from 5-phospho-alpha-D-ribose 1-diphosphate: step 3/9. Functionally, catalyzes the hydrolysis of the adenine ring of phosphoribosyl-AMP. In Syntrophotalea carbinolica (strain DSM 2380 / NBRC 103641 / GraBd1) (Pelobacter carbinolicus), this protein is Phosphoribosyl-AMP cyclohydrolase.